The chain runs to 709 residues: Potassium-transporting ATPase ATP-binding subunit (709 aa).

A run of 4 helical transmembrane segments spans residues 55–75 (VMLVVLVGAVITTLAFLRDLA), 86–106 (GLVAAFLWFTVLFANFAEAMA), 236–256 (IALNILLAGLTIIFLLAVVTL), and 269–289 (VVVLVALLVCLIPTTIGALLS). D324 acts as the 4-aspartylphosphate intermediate in catalysis. Residues D361, E365, 395–402 (FTAETRMS), and K417 contribute to the ATP site. D545 and D549 together coordinate Mg(2+). Transmembrane regions (helical) follow at residues 615 to 635 (FAIIPAMFVGLYPVLDKLNVM), 643 to 663 (AILSAVIFNALVIVALIPLAL), and 688 to 708 (GLVVPFIGIKLVDLVIVALGV).

It belongs to the cation transport ATPase (P-type) (TC 3.A.3) family. Type IA subfamily. The system is composed of three essential subunits: KdpA, KdpB and KdpC.

Its subcellular location is the cell membrane. The catalysed reaction is K(+)(out) + ATP + H2O = K(+)(in) + ADP + phosphate + H(+). Part of the high-affinity ATP-driven potassium transport (or Kdp) system, which catalyzes the hydrolysis of ATP coupled with the electrogenic transport of potassium into the cytoplasm. This subunit is responsible for energy coupling to the transport system and for the release of the potassium ions to the cytoplasm. This is Potassium-transporting ATPase ATP-binding subunit from Mycobacterium tuberculosis (strain ATCC 25618 / H37Rv).